The following is a 173-amino-acid chain: Chromophore lyase CpcS/CpeS 3 (173 aa).

It belongs to the CpcS/CpeS biliprotein lyase family.

Functionally, covalently attaches a chromophore to Cys residue(s) of phycobiliproteins. This chain is Chromophore lyase CpcS/CpeS 3, found in Trichodesmium erythraeum (strain IMS101).